The primary structure comprises 544 residues: MVSLLRCQSFKPSSIICSLALSAAFALSGTAFADESKPAENKPATPVVSPPKATAPSANKTQVRFTKTGTFDGDSVVKLARKLASKPYVVLKDPMPAGLAKLTYDEYRDIRFNPVSSIWRDQGLPFQMQMFHRGFYFQDLIEIAIVEANQATHLAYEPKYFTAGEVITQALPNDDIGYSGFRIHNQLNTNGVFDELMVFQGASYFRALGKGNAYGLSARGLALKTADPEGEEFPIFRAFWVERPSYDSNLIVVHALLDSPSVAGAYRFSVRPGDNTQIDVEATLFPRVELSKVGLAPSTSMFLHSLNGRHDTDDFRPEVHDSDGLLMFNGRGEHLWRPLANPRQLQVSAFSDNSPQGFGLIQRERNYASYQDLEAQYERRPSLWIEPVGNWGQGAVVLTEIPTESEIHDNIVSFWKPRQPIPAGSEYHFAYRMSWGDEPVAKTNSVVVSRTASGRADIAKATPRRLFVVDYHLNGTMPDELPLAKVESSGGVISNVVIARNAANNGYRLAFELEPEDKDLIELRAELKFSTPRQVETWLYRWTL.

Positions 1 to 33 (MVSLLRCQSFKPSSIICSLALSAAFALSGTAFA) are cleaved as a signal peptide. Residues 36-58 (SKPAENKPATPVVSPPKATAPSA) form a disordered region.

It belongs to the OpgD/OpgG family.

The protein localises to the periplasm. The protein operates within glycan metabolism; osmoregulated periplasmic glucan (OPG) biosynthesis. Functionally, involved in the biosynthesis of osmoregulated periplasmic glucans (OPGs). The polypeptide is Glucans biosynthesis protein G 1 (opgG1) (Shewanella oneidensis (strain ATCC 700550 / JCM 31522 / CIP 106686 / LMG 19005 / NCIMB 14063 / MR-1)).